Here is a 603-residue protein sequence, read N- to C-terminus: O-acetyltransferase OatA (603 aa).

Transmembrane regions (helical) follow at residues 17 to 37 (YLPG…IYHL), 45 to 65 (GFLG…SLLI), 87 to 107 (LIPA…IFKP), 148 to 168 (LWSL…ITFL), 177 to 197 (IIQT…VIHF), 211 to 231 (TRLQ…PFAL), 239 to 259 (IVVS…TLFF), 268 to 288 (IYNG…AIAV), 311 to 331 (YSLY…YVQG), 333 to 353 (IPVY…EISY), and 382 to 402 (VLVI…FDAL). Residues Ser-453, Asp-575, and His-578 contribute to the active site.

This sequence belongs to the acyltransferase 3 family.

It localises to the cell membrane. In terms of biological role, responsible for O-acetylation at the C(6)-hydroxyl group of N-acetylmuramyl residues, forming the corresponding N,6-O-diacetylmuramic acid of the peptidoglycan. O-acetylation of the peptidoglycan is the major determinant for lysozyme resistance. In Staphylococcus aureus (strain MRSA252), this protein is O-acetyltransferase OatA (oatA).